We begin with the raw amino-acid sequence, 158 residues long: Leptin-B (158 aa).

The N-terminal stretch at 1–19 (MYMPLALVYASFLTLPAST) is a signal peptide. Cys114 and Cys158 form a disulfide bridge.

Belongs to the leptin family. As to expression, highly expressed in the brain and eye. Expressed at low levels in muscle and skin.

It localises to the secreted. May function as part of a signaling pathway that acts to regulate the size of the body fat depot. This chain is Leptin-B, found in Oryzias latipes (Japanese rice fish).